Consider the following 232-residue polypeptide: Ion-translocating oxidoreductase complex subunit E (232 aa).

The next 6 membrane-spanning stretches (helical) occupy residues 18–38 (GLVQ…LTNA), 39–59 (LGLG…VSLV), 69–89 (IPVF…LINA), 93–113 (GLYL…IIIG), 127–147 (AAFD…VLGA), and 182–202 (PFLL…LIAL).

Belongs to the NqrDE/RnfAE family. The complex is composed of six subunits: RnfA, RnfB, RnfC, RnfD, RnfE and RnfG.

It localises to the cell inner membrane. Part of a membrane-bound complex that couples electron transfer with translocation of ions across the membrane. In Shewanella sp. (strain MR-4), this protein is Ion-translocating oxidoreductase complex subunit E.